A 382-amino-acid chain; its full sequence is Heme A synthase (382 aa).

The next 8 membrane-spanning stretches (helical) occupy residues 25-45 (GAVR…VAVG), 112-132 (LLGR…WARG), 141-161 (GLLG…IMVA), 176-196 (LALH…LAAG), 211-231 (VVAC…GLVA), 270-290 (LALV…VAIA), 303-323 (AAAG…GLGI), and 327-347 (LLHV…AVLI). His277 lines the heme pocket. His338 is a binding site for heme.

Belongs to the COX15/CtaA family. Type 2 subfamily. Interacts with CtaB. Requires heme b as cofactor.

It is found in the cell membrane. It carries out the reaction Fe(II)-heme o + 2 A + H2O = Fe(II)-heme a + 2 AH2. Its pathway is porphyrin-containing compound metabolism; heme A biosynthesis; heme A from heme O: step 1/1. Functionally, catalyzes the conversion of heme O to heme A by two successive hydroxylations of the methyl group at C8. The first hydroxylation forms heme I, the second hydroxylation results in an unstable dihydroxymethyl group, which spontaneously dehydrates, resulting in the formyl group of heme A. The protein is Heme A synthase of Methylorubrum extorquens (strain CM4 / NCIMB 13688) (Methylobacterium extorquens).